Here is a 145-residue protein sequence, read N- to C-terminus: MKKILVLHGPNLNLLGSREPSIYGHASLTQINGDLIQEADNAGIRLSCFQSNAEAELIQAVHQAGIDKINYIIINPAAFTHTSIALRDALSAVAIPFIEVHLSNIFSRETFRHHSYFSDIAVGVISGLGTKGYLLALQAIIKELK.

The active-site Proton acceptor is Tyr-23. Substrate-binding residues include Asn-75, His-81, and Asp-88. The active-site Proton donor is His-101. Residues 102 to 103 and Arg-112 contribute to the substrate site; that span reads LS.

The protein belongs to the type-II 3-dehydroquinase family. In terms of assembly, homododecamer.

It carries out the reaction 3-dehydroquinate = 3-dehydroshikimate + H2O. It functions in the pathway metabolic intermediate biosynthesis; chorismate biosynthesis; chorismate from D-erythrose 4-phosphate and phosphoenolpyruvate: step 3/7. Functionally, catalyzes a trans-dehydration via an enolate intermediate. The sequence is that of 3-dehydroquinate dehydratase from Legionella pneumophila (strain Lens).